A 392-amino-acid chain; its full sequence is L-rhamnonate dehydratase (392 aa).

Substrate-binding residues include His-22 and Arg-48. Positions 214, 240, and 268 each coordinate Mg(2+). His-318 serves as the catalytic Proton acceptor. A substrate-binding site is contributed by Glu-338.

Belongs to the mandelate racemase/muconate lactonizing enzyme family. RhamD subfamily. As to quaternary structure, homooctamer; tetramer of dimers. Mg(2+) serves as cofactor.

It carries out the reaction L-rhamnonate = 2-dehydro-3-deoxy-L-rhamnonate + H2O. Its function is as follows. Catalyzes the dehydration of L-rhamnonate to 2-keto-3-deoxy-L-rhamnonate (KDR). In Burkholderia ambifaria (strain ATCC BAA-244 / DSM 16087 / CCUG 44356 / LMG 19182 / AMMD) (Burkholderia cepacia (strain AMMD)), this protein is L-rhamnonate dehydratase.